The primary structure comprises 723 residues: Dipeptidyl aminopeptidase BI (723 aa).

Residues 1–23 (MKPTSLLLAATVLMSTPITSALA) form the signal peptide. Residues Ser574, Asp659, and His694 each act as charge relay system in the active site.

The protein belongs to the peptidase S9A family. Monomer.

Its activity is regulated as follows. Nearly completely inhibited by 0.5 mM ZnCl(2), 0.1 mM N-tosyl-L-lysyl chloromethyl ketone (TLCK) and 0.1 mM leupeptin. Strongly inhibited by 0.5 mM CoCl(2) and 0.1 mM chymostatin. Activity is hardly affected by general serine protease inhibitors phenylmethanesulfonyl fluoride (PMSF), diisopropyl fluorophosphate (DFP) and N-tosyl-L-phenyl-alanyl chloromethyl ketone (TPCK) or by aspartyl protease inhibitor pepstatin A or by CaCl(2) and EDTA. Cysteine protease inhibitors, such as N-ethylmaleimide (NEM), iodoacetic acid and L-trans-epoxysuccinyl-leucylamido(4-guanido)butane (E-64) have no effect on activity. In terms of biological role, sequentially removes dipeptide units (NH3-P2-P1-) from the amino termini of peptides and proteins. Is able to catalyze the removal of Asp-Arg from the amino termini of angiotensins I and II. Has slight endopeptidase activity on N-terminally blocked peptide derivatives which contain arginine residues at the P1 position. Does not hydrolyze Ala-Ala-Ala and Ala-Ala-Ala-Ala substrates or insulin beta chain. The chain is Dipeptidyl aminopeptidase BI from Pseudoxanthomonas mexicana.